A 100-amino-acid chain; its full sequence is MLYSKAREIYETKIKEAVFQFATTMRWTNDWEYSKNHKKPLVTRKAHMLVLIDREQIKAREALQNHKKAAFEWFMDNTAPETKKAVSAWFSGKNCERSFF.

This is an uncharacterized protein from Enterobacteria phage T4 (Bacteriophage T4).